A 485-amino-acid polypeptide reads, in one-letter code: NADH-quinone oxidoreductase subunit N (485 aa).

The next 14 membrane-spanning stretches (helical) occupy residues 8 to 28, 35 to 55, 71 to 91, 105 to 125, 127 to 147, 159 to 179, 203 to 223, 235 to 255, 271 to 291, 297 to 317, 326 to 346, 373 to 393, 408 to 430, and 455 to 475; these read LIAL…MLSI, FLNA…LWFV, GFAM…CTFA, FYLL…ANHL, SLFL…GYAF, YTIL…LVYA, LLAG…LVPF, PAPV…GVVM, VVLA…ALSQ, LLGY…IALQ, VGVY…VVSL, AAVM…LGFI, WWLV…RVAV, and IVVL…QPLI.

It belongs to the complex I subunit 2 family. NDH-1 is composed of 13 different subunits. Subunits NuoA, H, J, K, L, M, N constitute the membrane sector of the complex.

It is found in the cell inner membrane. It catalyses the reaction a quinone + NADH + 5 H(+)(in) = a quinol + NAD(+) + 4 H(+)(out). Its function is as follows. NDH-1 shuttles electrons from NADH, via FMN and iron-sulfur (Fe-S) centers, to quinones in the respiratory chain. The immediate electron acceptor for the enzyme in this species is believed to be ubiquinone. Couples the redox reaction to proton translocation (for every two electrons transferred, four hydrogen ions are translocated across the cytoplasmic membrane), and thus conserves the redox energy in a proton gradient. The sequence is that of NADH-quinone oxidoreductase subunit N from Shigella dysenteriae serotype 1 (strain Sd197).